The sequence spans 433 residues: tRNA(Ile)-lysidine synthase (433 aa).

27–32 (SGGLDS) lines the ATP pocket.

It belongs to the tRNA(Ile)-lysidine synthase family.

Its subcellular location is the cytoplasm. It catalyses the reaction cytidine(34) in tRNA(Ile2) + L-lysine + ATP = lysidine(34) in tRNA(Ile2) + AMP + diphosphate + H(+). In terms of biological role, ligates lysine onto the cytidine present at position 34 of the AUA codon-specific tRNA(Ile) that contains the anticodon CAU, in an ATP-dependent manner. Cytidine is converted to lysidine, thus changing the amino acid specificity of the tRNA from methionine to isoleucine. The sequence is that of tRNA(Ile)-lysidine synthase from Legionella pneumophila subsp. pneumophila (strain Philadelphia 1 / ATCC 33152 / DSM 7513).